A 161-amino-acid polypeptide reads, in one-letter code: Cytochrome b6-f complex subunit 4 (161 aa).

3 helical membrane passes run 37–57 (LLYI…GLAV), 96–116 (LLGV…PFIE), and 130–150 (AMTV…GAAF).

Belongs to the cytochrome b family. PetD subfamily. As to quaternary structure, the 4 large subunits of the cytochrome b6-f complex are cytochrome b6, subunit IV (17 kDa polypeptide, PetD), cytochrome f and the Rieske protein, while the 4 small subunits are PetG, PetL, PetM and PetN. The complex functions as a dimer.

It is found in the cellular thylakoid membrane. In terms of biological role, component of the cytochrome b6-f complex, which mediates electron transfer between photosystem II (PSII) and photosystem I (PSI), cyclic electron flow around PSI, and state transitions. This is Cytochrome b6-f complex subunit 4 from Synechococcus elongatus.